The sequence spans 437 residues: Elongation factor 1-gamma (437 aa).

Ala-2 bears the N-acetylalanine mark. The 86-residue stretch at 2–87 folds into the GST N-terminal domain; sequence AAGTLYTYPE…YVSNEELRGS (86 aa). Positions 88–216 constitute a GST C-terminal domain; sequence TPEAAAQVVQ…VKLCEKMAQF (129 aa). An N6-acetyllysine mark is found at Lys-147 and Lys-212. A compositionally biased stretch (basic and acidic residues) spans 221–254; that stretch reads FAETQPKKDTPRKEKGSREEKQKPQAERKEEKKA. The tract at residues 221–268 is disordered; the sequence is FAETQPKKDTPRKEKGSREEKQKPQAERKEEKKAAAPAPEEEMDECEQ. Lys-253 participates in a covalent cross-link: Glycyl lysine isopeptide (Lys-Gly) (interchain with G-Cter in SUMO1). The 162-residue stretch at 276–437 folds into the EF-1-gamma C-terminal domain; it reads AKDPFAHLPK…KAFNQGKIFK (162 aa). Lys-285 is covalently cross-linked (Glycyl lysine isopeptide (Lys-Gly) (interchain with G-Cter in SUMO2)). Lys-401 is modified (N6-acetyllysine). Lys-434 carries the post-translational modification N6-acetyllysine; alternate. The residue at position 434 (Lys-434) is an N6-malonyllysine; alternate.

As to quaternary structure, EF-1 is composed of four subunits: alpha, beta, delta, and gamma.

In terms of biological role, probably plays a role in anchoring the complex to other cellular components. This chain is Elongation factor 1-gamma (EEF1G), found in Macaca fascicularis (Crab-eating macaque).